A 231-amino-acid chain; its full sequence is Flagellar L-ring protein (231 aa).

A signal peptide spans Met1–Gly18. A lipid anchor (N-palmitoyl cysteine) is attached at Cys19. Cys19 carries S-diacylglycerol cysteine lipidation. A disordered region spans residues Leu118 to Ser141.

The protein belongs to the FlgH family. As to quaternary structure, the basal body constitutes a major portion of the flagellar organelle and consists of four rings (L,P,S, and M) mounted on a central rod.

The protein localises to the cell outer membrane. The protein resides in the bacterial flagellum basal body. Its function is as follows. Assembles around the rod to form the L-ring and probably protects the motor/basal body from shearing forces during rotation. The protein is Flagellar L-ring protein of Pseudomonas paraeruginosa (strain DSM 24068 / PA7) (Pseudomonas aeruginosa (strain PA7)).